The sequence spans 506 residues: Subtilisin-like serine protease Cur l 4.0101 (506 aa).

An N-terminal signal peptide occupies residues 1-15 (MKYSLIAALPALAAA). Residues 16 to 135 (SPTFSTETIH…IERDSEVRIL (120 aa)) constitute a propeptide, removed in mature form. Positions 43-134 (SYMVVFKKHV…YIERDSEVRI (92 aa)) constitute an Inhibitor I9 domain. The tract at residues 59–79 (HDWVQSVHSKNTQERMELRKR) is disordered. Residues 69 to 79 (NTQERMELRKR) show a composition bias toward basic and acidic residues. The 307-residue stretch at 147–453 (PWGLARISHR…GGSSNYTDII (307 aa)) folds into the Peptidase S8 domain. Residues D183 and H215 each act as charge relay system in the active site. N-linked (GlcNAc...) asparagine glycosylation is found at N245 and N285. The active-site Charge relay system is S381. Residue N448 is glycosylated (N-linked (GlcNAc...) asparagine). Residues 459–506 (TVKKAASKEEEKESEFRITIPSLSELEDDFEKAKESAGRKAHHVGGKL) constitute a propeptide, removed in mature form.

This sequence belongs to the peptidase S8 family.

In terms of biological role, serine protease. This chain is Subtilisin-like serine protease Cur l 4.0101, found in Cochliobolus lunatus (Filamentous fungus).